The chain runs to 206 residues: Ribosomal RNA large subunit methyltransferase E (206 aa).

S-adenosyl-L-methionine contacts are provided by Gly-63, Trp-65, Asp-83, Asp-99, and Asp-124. Lys-164 serves as the catalytic Proton acceptor.

This sequence belongs to the class I-like SAM-binding methyltransferase superfamily. RNA methyltransferase RlmE family.

The protein resides in the cytoplasm. The catalysed reaction is uridine(2552) in 23S rRNA + S-adenosyl-L-methionine = 2'-O-methyluridine(2552) in 23S rRNA + S-adenosyl-L-homocysteine + H(+). Specifically methylates the uridine in position 2552 of 23S rRNA at the 2'-O position of the ribose in the fully assembled 50S ribosomal subunit. The protein is Ribosomal RNA large subunit methyltransferase E of Buchnera aphidicola subsp. Acyrthosiphon pisum (strain APS) (Acyrthosiphon pisum symbiotic bacterium).